Here is a 396-residue protein sequence, read N- to C-terminus: Putative amidohydrolase YhaA (396 aa).

Aspartate 85 is a catalytic residue. Glutamate 143 serves as the catalytic Proton acceptor. Zn(2+) contacts are provided by glutamate 144, arginine 182, and histidine 368.

The protein belongs to the peptidase M20A family. Zn(2+) serves as cofactor. Co(2+) is required as a cofactor.

This is Putative amidohydrolase YhaA (yhaA) from Bacillus subtilis (strain 168).